We begin with the raw amino-acid sequence, 691 residues long: DNA ligase (691 aa).

Residues 41 to 45, 90 to 91, and Glu130 each bind NAD(+); these read DAEYD and SL. Residue Lys132 is the N6-AMP-lysine intermediate of the active site. The NAD(+) site is built by Arg153, Glu190, Lys307, and Lys331. Zn(2+) contacts are provided by Cys425, Cys428, Cys443, and Cys449. One can recognise a BRCT domain in the interval 610 to 691; the sequence is APQGVLAGKT…LHQLLEGNTP (82 aa).

This sequence belongs to the NAD-dependent DNA ligase family. LigA subfamily. Mg(2+) serves as cofactor. Requires Mn(2+) as cofactor.

The enzyme catalyses NAD(+) + (deoxyribonucleotide)n-3'-hydroxyl + 5'-phospho-(deoxyribonucleotide)m = (deoxyribonucleotide)n+m + AMP + beta-nicotinamide D-nucleotide.. In terms of biological role, DNA ligase that catalyzes the formation of phosphodiester linkages between 5'-phosphoryl and 3'-hydroxyl groups in double-stranded DNA using NAD as a coenzyme and as the energy source for the reaction. It is essential for DNA replication and repair of damaged DNA. In Burkholderia cenocepacia (strain ATCC BAA-245 / DSM 16553 / LMG 16656 / NCTC 13227 / J2315 / CF5610) (Burkholderia cepacia (strain J2315)), this protein is DNA ligase.